A 353-amino-acid polypeptide reads, in one-letter code: DNA-directed RNA polymerase subunit alpha (353 aa).

An alpha N-terminal domain (alpha-NTD) region spans residues 1 to 226 (MLISQRPTLT…ELFGLARELN (226 aa)). Positions 241 to 353 (ADHIASFGLP…TEDYAETEQL (113 aa)) are alpha C-terminal domain (alpha-CTD). The interval 326 to 353 (ATGTWSDTDAGSFGDAEGTEDYAETEQL) is disordered. Over residues 342–353 (EGTEDYAETEQL) the composition is skewed to acidic residues.

This sequence belongs to the RNA polymerase alpha chain family. As to quaternary structure, homodimer. The RNAP catalytic core consists of 2 alpha, 1 beta, 1 beta' and 1 omega subunit. When a sigma factor is associated with the core the holoenzyme is formed, which can initiate transcription.

The enzyme catalyses RNA(n) + a ribonucleoside 5'-triphosphate = RNA(n+1) + diphosphate. Its function is as follows. DNA-dependent RNA polymerase catalyzes the transcription of DNA into RNA using the four ribonucleoside triphosphates as substrates. The polypeptide is DNA-directed RNA polymerase subunit alpha (Rhodococcus jostii (strain RHA1)).